We begin with the raw amino-acid sequence, 624 residues long: Altered inheritance of mitochondria protein 9, mitochondrial (624 aa).

Residues 1–34 (MLSRVARYSRTLNQLTRTSQGGLLSAVLRTSIRQ) constitute a mitochondrion transit peptide.

The protein belongs to the AIM9 family.

It localises to the mitochondrion. This Candida dubliniensis (strain CD36 / ATCC MYA-646 / CBS 7987 / NCPF 3949 / NRRL Y-17841) (Yeast) protein is Altered inheritance of mitochondria protein 9, mitochondrial (AIM9).